A 491-amino-acid polypeptide reads, in one-letter code: Serine hydroxymethyltransferase (491 aa).

(6S)-5,6,7,8-tetrahydrofolate is bound by residues leucine 173 and 177–179 (GHL). At lysine 285 the chain carries N6-(pyridoxal phosphate)lysine.

Belongs to the SHMT family. As to quaternary structure, homodimer. It depends on pyridoxal 5'-phosphate as a cofactor.

The protein resides in the cytoplasm. It catalyses the reaction (6R)-5,10-methylene-5,6,7,8-tetrahydrofolate + glycine + H2O = (6S)-5,6,7,8-tetrahydrofolate + L-serine. The protein operates within one-carbon metabolism; tetrahydrofolate interconversion. Its pathway is amino-acid biosynthesis; glycine biosynthesis; glycine from L-serine: step 1/1. In terms of biological role, catalyzes the reversible interconversion of serine and glycine with tetrahydrofolate (THF) serving as the one-carbon carrier. This reaction serves as the major source of one-carbon groups required for the biosynthesis of purines, thymidylate, methionine, and other important biomolecules. Also exhibits THF-independent aldolase activity toward beta-hydroxyamino acids, producing glycine and aldehydes, via a retro-aldol mechanism. This is Serine hydroxymethyltransferase from Cutibacterium acnes (strain DSM 16379 / KPA171202) (Propionibacterium acnes).